We begin with the raw amino-acid sequence, 446 residues long: NADH-quinone oxidoreductase subunit D (446 aa).

The protein belongs to the complex I 49 kDa subunit family. NDH-1 is composed of 14 different subunits. Subunits NuoB, C, D, E, F, and G constitute the peripheral sector of the complex.

It is found in the cell membrane. The enzyme catalyses a quinone + NADH + 5 H(+)(in) = a quinol + NAD(+) + 4 H(+)(out). NDH-1 shuttles electrons from NADH, via FMN and iron-sulfur (Fe-S) centers, to quinones in the respiratory chain. The immediate electron acceptor for the enzyme in this species is believed to be a menaquinone. Couples the redox reaction to proton translocation (for every two electrons transferred, four hydrogen ions are translocated across the cytoplasmic membrane), and thus conserves the redox energy in a proton gradient. The sequence is that of NADH-quinone oxidoreductase subunit D from Nocardioides sp. (strain ATCC BAA-499 / JS614).